Reading from the N-terminus, the 169-residue chain is Ribosome maturation factor RimM (169 aa).

The region spanning 97 to 169 (EDEVYFKDLI…KIVVDWEYDY (73 aa)) is the PRC barrel domain.

The protein belongs to the RimM family. Binds ribosomal protein uS19.

It localises to the cytoplasm. An accessory protein needed during the final step in the assembly of 30S ribosomal subunit, possibly for assembly of the head region. Essential for efficient processing of 16S rRNA. May be needed both before and after RbfA during the maturation of 16S rRNA. It has affinity for free ribosomal 30S subunits but not for 70S ribosomes. This is Ribosome maturation factor RimM from Francisella tularensis subsp. tularensis (strain WY96-3418).